We begin with the raw amino-acid sequence, 721 residues long: Fatty acid oxidation complex subunit alpha (721 aa).

Residues 1 to 190 (MIYEGKAITV…KVGAVDAVVA (190 aa)) form an enoyl-CoA hydratase/isomerase region. Aspartate 297 is a binding site for substrate. Positions 312-721 (KDVKQAAVLG…SFFGQASSEE (410 aa)) are 3-hydroxyacyl-CoA dehydrogenase. Residues methionine 325, aspartate 344, 401 to 403 (VVE), lysine 408, and serine 430 contribute to the NAD(+) site. Histidine 451 acts as the For 3-hydroxyacyl-CoA dehydrogenase activity in catalysis. Position 454 (asparagine 454) interacts with NAD(+). Substrate contacts are provided by asparagine 501 and tyrosine 660.

It in the N-terminal section; belongs to the enoyl-CoA hydratase/isomerase family. In the C-terminal section; belongs to the 3-hydroxyacyl-CoA dehydrogenase family. In terms of assembly, heterotetramer of two alpha chains (FadB) and two beta chains (FadA).

It carries out the reaction a (3S)-3-hydroxyacyl-CoA + NAD(+) = a 3-oxoacyl-CoA + NADH + H(+). The enzyme catalyses a (3S)-3-hydroxyacyl-CoA = a (2E)-enoyl-CoA + H2O. The catalysed reaction is a 4-saturated-(3S)-3-hydroxyacyl-CoA = a (3E)-enoyl-CoA + H2O. It catalyses the reaction (3S)-3-hydroxybutanoyl-CoA = (3R)-3-hydroxybutanoyl-CoA. It carries out the reaction a (3Z)-enoyl-CoA = a 4-saturated (2E)-enoyl-CoA. The enzyme catalyses a (3E)-enoyl-CoA = a 4-saturated (2E)-enoyl-CoA. The protein operates within lipid metabolism; fatty acid beta-oxidation. Functionally, involved in the aerobic and anaerobic degradation of long-chain fatty acids via beta-oxidation cycle. Catalyzes the formation of 3-oxoacyl-CoA from enoyl-CoA via L-3-hydroxyacyl-CoA. It can also use D-3-hydroxyacyl-CoA and cis-3-enoyl-CoA as substrate. The protein is Fatty acid oxidation complex subunit alpha of Pseudomonas savastanoi pv. phaseolicola (strain 1448A / Race 6) (Pseudomonas syringae pv. phaseolicola (strain 1448A / Race 6)).